Reading from the N-terminus, the 24-residue chain is SLGGKPDLRPCHPPCHYIPRPKPR.

The segment covering 1-10 (SLGGKPDLRP) has biased composition (basic and acidic residues). The segment at 1–24 (SLGGKPDLRPCHPPCHYIPRPKPR) is disordered. Cysteines 11 and 15 form a disulfide.

Belongs to the waglerin family. As to quaternary structure, waglerin-1 is monomeric. Post-translationally, amidation of the waglerin-1 C-terminus increases the affinity by 2-fold. As to expression, expressed by the venom gland.

Its subcellular location is the secreted. In terms of biological role, waglerin-1 selectively blocks the epsilon subunit of muscle nicotinic acetylcholine receptor (nAChR). Also has effects on rodent ionotropic GABA(A) receptors (GABR), since it potentiates I(GABA) in some neurons and depresses I(GABA) in others. In mice, it elicits tachypnea, ocular proptosis, rapid collapse and spasms, whereas no toxic effects on respiration and blood pressure are observed in rats. Waglerin-3 selectively blocks the epsilon subunit of muscle nicotinic acetylcholine receptor (nAChR). It elicits tachypnea, ocular proptosis, rapid collapse and spasms in mice. It causes death by respiratory failure. This chain is Waglerin-3, found in Tropidolaemus wagleri (Wagler's pit viper).